Reading from the N-terminus, the 137-residue chain is Large ribosomal subunit protein bL17 (137 aa).

It belongs to the bacterial ribosomal protein bL17 family. Part of the 50S ribosomal subunit. Contacts protein L32.

This chain is Large ribosomal subunit protein bL17, found in Bradyrhizobium sp. (strain ORS 278).